Reading from the N-terminus, the 183-residue chain is Adenine phosphoribosyltransferase (183 aa).

Belongs to the purine/pyrimidine phosphoribosyltransferase family. As to quaternary structure, homodimer.

It localises to the cytoplasm. The enzyme catalyses AMP + diphosphate = 5-phospho-alpha-D-ribose 1-diphosphate + adenine. It functions in the pathway purine metabolism; AMP biosynthesis via salvage pathway; AMP from adenine: step 1/1. Catalyzes a salvage reaction resulting in the formation of AMP, that is energically less costly than de novo synthesis. The chain is Adenine phosphoribosyltransferase from Klebsiella pneumoniae subsp. pneumoniae (strain ATCC 700721 / MGH 78578).